The chain runs to 82 residues: Turripeptide Gsp9.1 (82 aa).

Residues 1–23 form the signal peptide; it reads MMAKLMITVMMVLLLSLQQGADG. Positions 24-46 are excised as a propeptide; that stretch reads RSKRWRKNQMAASSIMRNLITAR. Pro-49 and Pro-50 each carry 4-hydroxyproline. Intrachain disulfides connect Cys-53/Cys-68, Cys-58/Cys-72, and Cys-64/Cys-79. Glu-60 and Glu-63 each carry 4-carboxyglutamate.

This sequence belongs to the Pg turripeptide superfamily. In terms of tissue distribution, expressed by the venom duct.

It localises to the secreted. The sequence is that of Turripeptide Gsp9.1 from Gemmula speciosa (Splendid gem-turris).